We begin with the raw amino-acid sequence, 186 residues long: MTIADIKKTTEAKMDQSIAAFKNNLAKIRTGRANPQLLDTIHVEYYGSMVPLSQVANVALLDARTISVQPWEKNMGAKIEKAIRESDLGLNPASMGDLIRVPMPPMSEERRKEMTKLARSEGEGAKVAIRNLRRDANEGVKKLVKDKLASEDDQKRAEADVQKTTDKHIAEIDALVAAKEQEIMAI.

It belongs to the RRF family.

It localises to the cytoplasm. Its function is as follows. Responsible for the release of ribosomes from messenger RNA at the termination of protein biosynthesis. May increase the efficiency of translation by recycling ribosomes from one round of translation to another. The protein is Ribosome-recycling factor of Acidovorax ebreus (strain TPSY) (Diaphorobacter sp. (strain TPSY)).